The primary structure comprises 264 residues: 3-methyl-2-oxobutanoate hydroxymethyltransferase (264 aa).

D45 and D84 together coordinate Mg(2+). 3-methyl-2-oxobutanoate-binding positions include 45-46, D84, and K113; that span reads DS. E115 is a binding site for Mg(2+). Residue E182 is the Proton acceptor of the active site.

It belongs to the PanB family. In terms of assembly, homodecamer; pentamer of dimers. Mg(2+) is required as a cofactor.

It is found in the cytoplasm. The catalysed reaction is 3-methyl-2-oxobutanoate + (6R)-5,10-methylene-5,6,7,8-tetrahydrofolate + H2O = 2-dehydropantoate + (6S)-5,6,7,8-tetrahydrofolate. It participates in cofactor biosynthesis; (R)-pantothenate biosynthesis; (R)-pantoate from 3-methyl-2-oxobutanoate: step 1/2. In terms of biological role, catalyzes the reversible reaction in which hydroxymethyl group from 5,10-methylenetetrahydrofolate is transferred onto alpha-ketoisovalerate to form ketopantoate. In Caldicellulosiruptor saccharolyticus (strain ATCC 43494 / DSM 8903 / Tp8T 6331), this protein is 3-methyl-2-oxobutanoate hydroxymethyltransferase.